The chain runs to 301 residues: Probable alpha-L-glutamate ligase (301 aa).

The region spanning 104-287 (LQILARKGIG…VAGKIIEYLE (184 aa)) is the ATP-grasp domain. ATP contacts are provided by residues Lys-141, 178–179 (EY), Asp-187, and 211–213 (RSN). Asp-248, Glu-260, and Asn-262 together coordinate Mg(2+). Residues Asp-248, Glu-260, and Asn-262 each coordinate Mn(2+).

Belongs to the RimK family. Mg(2+) serves as cofactor. It depends on Mn(2+) as a cofactor.

The polypeptide is Probable alpha-L-glutamate ligase (Picosynechococcus sp. (strain ATCC 27264 / PCC 7002 / PR-6) (Agmenellum quadruplicatum)).